Here is a 69-residue protein sequence, read N- to C-terminus: Cap-specific mRNA (nucleoside-2'-O-)-methyltransferase (69 aa).

Tyr-22 contributes to the mRNA binding site. Positions 39, 66, and 68 each coordinate S-adenosyl-L-methionine.

Belongs to the class I-like SAM-binding methyltransferase superfamily. Poxvirus/kinetoplastid 2'-O-MTase family. Interacts with poly(A) polymerase catalytic subunit OPG063. Interacts with OPG109 and OPG123; these interactions might help linking transcription to capping and polyadenylation.

The protein localises to the virion. The enzyme catalyses a 5'-end (N(7)-methyl 5'-triphosphoguanosine)-ribonucleoside in mRNA + S-adenosyl-L-methionine = a 5'-end (N(7)-methyl 5'-triphosphoguanosine)-(2'-O-methyl-ribonucleoside) in mRNA + S-adenosyl-L-homocysteine + H(+). Functionally, displays methyltransferase, positive regulation of the poly(A) polymerase and transcription elongation activities. Involved in the modification of both mRNA ends and in intermediate and late gene positive transcription elongation. At the mRNAs 5' end, methylates the ribose 2' OH group of the first transcribed nucleotide, thereby producing a 2'-O-methylpurine cap. At the 3' end, functions as a processivity factor which stimulates the activity of the viral poly(A) polymerase OPG063 that creates mRNA's poly(A) tail. In the presence of OPG102, OPG063 does not dissociate from the RNA allowing tail elongation to around 250 adenylates. This Sus scrofa (Pig) protein is Cap-specific mRNA (nucleoside-2'-O-)-methyltransferase (OPG102).